The chain runs to 166 residues: MTKAIFPGSFDPITNGHAEVVEAAARMFEKLYVVIMTNTSKKYLFDEKERLDLAKKVFENDKNIEVIARPAELTVEVAHELNAGAIVRGLRNTTDFNYERDIAGINKTLDPKLNTVLLFTRPEDSFISSSMIKETVFFGGNVSTLVPKPVAAALEEKLRNQNNEEK.

Ser-9 provides a ligand contact to substrate. Residues Ser-9 to Phe-10 and His-17 each bind ATP. 3 residues coordinate substrate: Lys-41, Thr-74, and Arg-88. ATP-binding positions include Gly-89 to Arg-91, Glu-99, and Asp-124 to Ser-130.

Belongs to the bacterial CoaD family. Homohexamer. It depends on Mg(2+) as a cofactor.

It localises to the cytoplasm. It carries out the reaction (R)-4'-phosphopantetheine + ATP + H(+) = 3'-dephospho-CoA + diphosphate. It participates in cofactor biosynthesis; coenzyme A biosynthesis; CoA from (R)-pantothenate: step 4/5. Functionally, reversibly transfers an adenylyl group from ATP to 4'-phosphopantetheine, yielding dephospho-CoA (dPCoA) and pyrophosphate. The chain is Phosphopantetheine adenylyltransferase from Lactobacillus gasseri (strain ATCC 33323 / DSM 20243 / BCRC 14619 / CIP 102991 / JCM 1131 / KCTC 3163 / NCIMB 11718 / NCTC 13722 / AM63).